The primary structure comprises 545 residues: Chaperonin GroEL 2 (545 aa).

ATP is bound by residues 29–32, 86–90, Gly414, and Asp499; these read TLGP and DGTTT.

This sequence belongs to the chaperonin (HSP60) family. As to quaternary structure, forms a cylinder of 14 subunits composed of two heptameric rings stacked back-to-back. Interacts with the co-chaperonin GroES.

It is found in the cytoplasm. The enzyme catalyses ATP + H2O + a folded polypeptide = ADP + phosphate + an unfolded polypeptide.. Together with its co-chaperonin GroES, plays an essential role in assisting protein folding. The GroEL-GroES system forms a nano-cage that allows encapsulation of the non-native substrate proteins and provides a physical environment optimized to promote and accelerate protein folding. This chain is Chaperonin GroEL 2, found in Chloroflexus aurantiacus (strain ATCC 29366 / DSM 635 / J-10-fl).